Consider the following 705-residue polypeptide: Dolichyl-diphosphooligosaccharide--protein glycosyltransferase subunit STT3A (705 aa).

The Cytoplasmic segment spans residues 1 to 17 (MTKFGFLRLSYEKQDTL). Residues 18–38 (LKLLILSMAAVLSFSTRLFAV) traverse the membrane as a helical segment. Over 39–119 (LRFESVIHEF…IDIRNVCVFL (81 aa)) the chain is Lumenal. The DXD motif 1 signature appears at 47–49 (EFD). Asp49 serves as a coordination point for Mn(2+). A helical membrane pass occupies residues 120–138 (APLFSSFTTIVTYHLTKEL). Topologically, residues 139–140 (KD) are cytoplasmic. Residues 141 to 158 (AGAGLLAAAMIAVVPGYI) traverse the membrane as a helical segment. At 159–169 (SRSVAGSYDNE) the chain is on the lumenal side. Mn(2+) contacts are provided by Asp167 and Glu169. A DXD motif 2 motif is present at residues 167 to 169 (DNE). A helical membrane pass occupies residues 170–189 (GIAIFCMLLTYYMWIKAVKT). The Cytoplasmic segment spans residues 190–191 (GS). The chain crosses the membrane as a helical span at residues 192 to 206 (ICWAAKCALAYFYMV). The Lumenal segment spans residues 207-211 (SSWGG). The chain crosses the membrane as a helical span at residues 212-228 (YVFLINLIPLHVLVLML). The Cytoplasmic segment spans residues 229–233 (TGRFS). The chain crosses the membrane as a helical span at residues 234–259 (HRIYVAYCTVYCLGTILSMQISFVGF). Topologically, residues 260 to 267 (QPVLSSEH) are lumenal. Residues 268–287 (MAAFGVFGLCQIHAFVDYLR) traverse the membrane as a helical segment. The Cytoplasmic segment spans residues 288–300 (SKLNPQQFEVLFR). Residues 301 to 321 (SVISLVGFVLLTVGALLMLTG) traverse the membrane as a helical segment. The Lumenal segment spans residues 322-356 (KISPWTGRFYSLLDPSYAKNNIPIIASVSEHQPTT). The short motif at 348–351 (SVSE) is the SVSE motif element. Residues 357-379 (WSSYYFDLQLLVFMFPVGLYYCF) form a helical membrane-spanning segment. At 380 to 385 (SNLSDA) the chain is on the cytoplasmic side. A helical transmembrane segment spans residues 386 to 402 (RIFIIMYGVTSMYFSAV). The Lumenal segment spans residues 403–406 (MVRL). Residue Arg405 participates in dolichyl diphosphooligosaccharide binding. A helical membrane pass occupies residues 407–428 (MLVLAPVMCILSGIGVSQVLST). The Cytoplasmic segment spans residues 429-453 (YMKNLDISRPDKKSKKQQDSTYPIK). A helical transmembrane segment spans residues 454–473 (NEVASGMILVMAFFLITYTF). Residues 474–705 (HSTWVTSEAY…DLDNRGLSRT (232 aa)) are Lumenal-facing. The interacts with target acceptor peptide in protein substrate stretch occupies residues 525–527 (WWD). The short motif at 525 to 529 (WWDYG) is the WWDYG motif element. Residue Tyr530 coordinates dolichyl diphosphooligosaccharide. Asn537 and Asn544 each carry an N-linked (GlcNAc...) asparagine glycan. Asn548 carries an N-linked (GlcNAc...) (high mannose) asparagine glycan. The short motif at 592-599 (DINKFLWM) is the DK motif element.

The protein belongs to the STT3 family. Component of the oligosaccharyltransferase (OST) complex. There are 2 OST complexes, OST-A and OST-B, which contain STT3A or STT3B as catalytic subunit, respectively. OST-A and OST-B contain common core subunits RPN1, RPN2, OST48, OST4, DAD1 and TMEM258, and OST-A contains DC2/OSTC and KRTCAP2/KCP2 specific accessory subunits. OST-A complex assembly occurs through the formation of 3 subcomplexes. Subcomplex 1 contains RPN1 and TMEM258, subcomplex 2 contains the OST-A-specific subunits STT3A, DC2/OSTC, and KCP2 as well as the core subunit OST4, and subcomplex 3 contains RPN2, DAD1, and OST48. The OST-A complex can form stable complexes with the Sec61 complex or with both the Sec61 and TRAP complexes. The cofactor is Mg(2+). Mn(2+) serves as cofactor. Expressed at high levels in placenta, liver, muscle and pancreas, and at very low levels in brain, lung and kidney. Expressed in skin fibroblasts (at protein level).

It is found in the endoplasmic reticulum. It localises to the endoplasmic reticulum membrane. The catalysed reaction is a di-trans,poly-cis-dolichyl diphosphooligosaccharide + L-asparaginyl-[protein] = N(4)-(oligosaccharide-(1-&gt;4)-N-acetyl-beta-D-glucosaminyl-(1-&gt;4)-N-acetyl-beta-D-glucosaminyl)-L-asparaginyl-[protein] + a di-trans,poly-cis-dolichyl diphosphate + H(+). It functions in the pathway protein modification; protein glycosylation. With respect to regulation, STT3A, but not STT3B, is specifically inhibited by the N-glycosylation inhibitor NGI-235, which prevents productive binding pose of the glycan donor in the active site of STT3A. Catalytic subunit of the oligosaccharyl transferase (OST) complex that catalyzes the initial transfer of a defined glycan (Glc(3)Man(9)GlcNAc(2) in eukaryotes) from the lipid carrier dolichol-pyrophosphate to an asparagine residue within an Asn-X-Ser/Thr consensus motif in nascent polypeptide chains, the first step in protein N-glycosylation. N-glycosylation occurs cotranslationally and the complex associates with the Sec61 complex at the channel-forming translocon complex that mediates protein translocation across the endoplasmic reticulum (ER). All subunits are required for a maximal enzyme activity. This subunit contains the active site and the acceptor peptide and donor lipid-linked oligosaccharide (LLO) binding pockets. STT3A is present in the majority of OST complexes and mediates cotranslational N-glycosylation of most sites on target proteins, while STT3B-containing complexes are required for efficient post-translational glycosylation and mediate glycosylation of sites that have been skipped by STT3A. STT3A-containing OST-A complex is also required to prevent hyperglycosylation of some target proteins by preventing glycosylation of facultative sites before folding of target proteins is completed. In Homo sapiens (Human), this protein is Dolichyl-diphosphooligosaccharide--protein glycosyltransferase subunit STT3A.